A 406-amino-acid polypeptide reads, in one-letter code: Phosphopentomutase (406 aa).

Mn(2+) is bound by residues Asp-10, Asp-305, His-310, Asp-346, His-347, and His-358.

The protein belongs to the phosphopentomutase family. Mn(2+) is required as a cofactor.

The protein resides in the cytoplasm. It catalyses the reaction 2-deoxy-alpha-D-ribose 1-phosphate = 2-deoxy-D-ribose 5-phosphate. It carries out the reaction alpha-D-ribose 1-phosphate = D-ribose 5-phosphate. It functions in the pathway carbohydrate degradation; 2-deoxy-D-ribose 1-phosphate degradation; D-glyceraldehyde 3-phosphate and acetaldehyde from 2-deoxy-alpha-D-ribose 1-phosphate: step 1/2. Its function is as follows. Isomerase that catalyzes the conversion of deoxy-ribose 1-phosphate (dRib-1-P) and ribose 1-phosphate (Rib-1-P) to deoxy-ribose 5-phosphate (dRib-5-P) and ribose 5-phosphate (Rib-5-P), respectively. The sequence is that of Phosphopentomutase from Methylobacterium radiotolerans (strain ATCC 27329 / DSM 1819 / JCM 2831 / NBRC 15690 / NCIMB 10815 / 0-1).